The sequence spans 500 residues: GTPase Der (500 aa).

EngA-type G domains follow at residues 3–166 and 211–384; these read PVVA…MEEL and IKLA…VSAT. Residues 9–16, 56–60, 118–121, 217–224, 264–268, and 329–332 contribute to the GTP site; these read GRPNVGKS, DTGGI, NKID, DTAGV, and NKWD. One can recognise a KH-like domain in the interval 385–469; it reads KRVGTSVLTR…PIRIQFQNSE (85 aa). Residues 468 to 500 are disordered; that stretch reads SENPFEDRGGKLTMSQERQRKRLLGAVKNRNKK. Over residues 486–500 the composition is skewed to basic residues; it reads QRKRLLGAVKNRNKK.

Belongs to the TRAFAC class TrmE-Era-EngA-EngB-Septin-like GTPase superfamily. EngA (Der) GTPase family. Associates with the 50S ribosomal subunit.

Its function is as follows. GTPase that plays an essential role in the late steps of ribosome biogenesis. This is GTPase Der from Aliivibrio fischeri (strain ATCC 700601 / ES114) (Vibrio fischeri).